Consider the following 172-residue polypeptide: Gamma-crystallin-4 (172 aa).

Beta/gamma crystallin 'Greek key' domains are found at residues 1–37 and 38–80; these read IFFYEERNFQGRCYECSSECSDLSSYFNRCNSIRVES and GNWI…RFIP. Positions 81–85 are connecting peptide; that stretch reads HPHSQ. Beta/gamma crystallin 'Greek key' domains are found at residues 86–126 and 127–169; these read YKMR…NVSD and GHWM…RRVH.

The protein belongs to the beta/gamma-crystallin family. Monomer.

Crystallins are the dominant structural components of the vertebrate eye lens. The sequence is that of Gamma-crystallin-4 (cryg4) from Xenopus laevis (African clawed frog).